The following is a 309-amino-acid chain: Glutaminase (309 aa).

Substrate-binding residues include S64, N114, E160, N167, Y191, Y243, and V261.

It belongs to the glutaminase family. As to quaternary structure, homotetramer.

It carries out the reaction L-glutamine + H2O = L-glutamate + NH4(+). In Methylobacterium radiotolerans (strain ATCC 27329 / DSM 1819 / JCM 2831 / NBRC 15690 / NCIMB 10815 / 0-1), this protein is Glutaminase.